An 879-amino-acid polypeptide reads, in one-letter code: Beta-mannosidase (879 aa).

Residues 1 to 17 (MLLRLLLLLAPCGAGFA) form the signal peptide. 2 N-linked (GlcNAc...) asparagine glycosylation sites follow: asparagine 35 and asparagine 77. Cysteine 167 and cysteine 176 are disulfide-bonded. 190 to 192 (WDW) contributes to the substrate binding site. Residues asparagine 297 and asparagine 302 are each glycosylated (N-linked (GlcNAc...) asparagine). Position 456 (asparagine 456) interacts with substrate. Glutamate 457 serves as the catalytic Proton donor. Intrachain disulfides connect cysteine 540–cysteine 629, cysteine 732–cysteine 761, and cysteine 764–cysteine 769. Catalysis depends on glutamate 554, which acts as the Nucleophile. An N-linked (GlcNAc...) asparagine glycan is attached at asparagine 607. Asparagine 803 carries N-linked (GlcNAc...) asparagine glycosylation.

It belongs to the glycosyl hydrolase 2 family. As to quaternary structure, monomer. In terms of processing, the N-terminus is blocked. N-glycosylated. As to expression, detected in kidney (at protein level). Highest expression is found in thyroid tissue. The amount of transcript is significantly higher in normal tissues than in tissues affected by the disease.

It localises to the lysosome. The catalysed reaction is Hydrolysis of terminal, non-reducing beta-D-mannose residues in beta-D-mannosides.. It functions in the pathway glycan metabolism; N-glycan degradation. Its function is as follows. Exoglycosidase that cleaves the single beta-linked mannose residue from the non-reducing end of all N-linked glycoprotein oligosaccharides. This chain is Beta-mannosidase (MANBA), found in Bos taurus (Bovine).